A 156-amino-acid polypeptide reads, in one-letter code: Small ribosomal subunit protein uS7 (156 aa).

This sequence belongs to the universal ribosomal protein uS7 family. Part of the 30S ribosomal subunit. Contacts proteins S9 and S11.

Functionally, one of the primary rRNA binding proteins, it binds directly to 16S rRNA where it nucleates assembly of the head domain of the 30S subunit. Is located at the subunit interface close to the decoding center, probably blocks exit of the E-site tRNA. The polypeptide is Small ribosomal subunit protein uS7 (Desulforudis audaxviator (strain MP104C)).